A 152-amino-acid polypeptide reads, in one-letter code: Deoxyuridine 5'-triphosphate nucleotidohydrolase (152 aa).

Substrate is bound by residues 71–73, asparagine 84, 88–90, and methionine 98; these read RSG and LID.

The protein belongs to the dUTPase family. Mg(2+) is required as a cofactor.

The enzyme catalyses dUTP + H2O = dUMP + diphosphate + H(+). The protein operates within pyrimidine metabolism; dUMP biosynthesis; dUMP from dCTP (dUTP route): step 2/2. In terms of biological role, this enzyme is involved in nucleotide metabolism: it produces dUMP, the immediate precursor of thymidine nucleotides and it decreases the intracellular concentration of dUTP so that uracil cannot be incorporated into DNA. This is Deoxyuridine 5'-triphosphate nucleotidohydrolase from Shewanella amazonensis (strain ATCC BAA-1098 / SB2B).